Reading from the N-terminus, the 930-residue chain is Isoleucine--tRNA ligase (930 aa).

The short motif at 57 to 67 (PYANGNIHVGH) is the 'HIGH' region element. An L-isoleucyl-5'-AMP-binding site is contributed by E554. The 'KMSKS' region motif lies at 595-599 (KMSKS). Residue K598 participates in ATP binding. Zn(2+) contacts are provided by C888, C891, C908, and C911.

The protein belongs to the class-I aminoacyl-tRNA synthetase family. IleS type 1 subfamily. As to quaternary structure, monomer. Zn(2+) serves as cofactor.

It is found in the cytoplasm. It carries out the reaction tRNA(Ile) + L-isoleucine + ATP = L-isoleucyl-tRNA(Ile) + AMP + diphosphate. Functionally, catalyzes the attachment of isoleucine to tRNA(Ile). As IleRS can inadvertently accommodate and process structurally similar amino acids such as valine, to avoid such errors it has two additional distinct tRNA(Ile)-dependent editing activities. One activity is designated as 'pretransfer' editing and involves the hydrolysis of activated Val-AMP. The other activity is designated 'posttransfer' editing and involves deacylation of mischarged Val-tRNA(Ile). The protein is Isoleucine--tRNA ligase of Streptococcus pneumoniae (strain Taiwan19F-14).